Consider the following 81-residue polypeptide: Photosystem I iron-sulfur center (81 aa).

2 4Fe-4S ferredoxin-type domains span residues 2-31 (SHSV…MVPW) and 39-68 (IASA…VRVY). Residues Cys11, Cys14, Cys17, Cys21, Cys48, Cys51, Cys54, and Cys58 each coordinate [4Fe-4S] cluster.

The eukaryotic PSI reaction center is composed of at least 11 subunits. Requires [4Fe-4S] cluster as cofactor.

The protein resides in the plastid. It localises to the chloroplast thylakoid membrane. It catalyses the reaction reduced [plastocyanin] + hnu + oxidized [2Fe-2S]-[ferredoxin] = oxidized [plastocyanin] + reduced [2Fe-2S]-[ferredoxin]. In terms of biological role, apoprotein for the two 4Fe-4S centers FA and FB of photosystem I (PSI); essential for photochemical activity. FB is the terminal electron acceptor of PSI, donating electrons to ferredoxin. The C-terminus interacts with PsaA/B/D and helps assemble the protein into the PSI complex. Required for binding of PsaD and PsaE to PSI. PSI is a plastocyanin/cytochrome c6-ferredoxin oxidoreductase, converting photonic excitation into a charge separation, which transfers an electron from the donor P700 chlorophyll pair to the spectroscopically characterized acceptors A0, A1, FX, FA and FB in turn. The sequence is that of Photosystem I iron-sulfur center from Emiliania huxleyi (Coccolithophore).